A 153-amino-acid chain; its full sequence is Regulatory protein RecX (153 aa).

The protein belongs to the RecX family.

The protein localises to the cytoplasm. Functionally, modulates RecA activity. The protein is Regulatory protein RecX of Syntrophotalea carbinolica (strain DSM 2380 / NBRC 103641 / GraBd1) (Pelobacter carbinolicus).